We begin with the raw amino-acid sequence, 401 residues long: Nicotinate phosphoribosyltransferase (401 aa).

H221 bears the Phosphohistidine; by autocatalysis mark.

Belongs to the NAPRTase family. In terms of processing, transiently phosphorylated on a His residue during the reaction cycle. Phosphorylation strongly increases the affinity for substrates and increases the rate of nicotinate D-ribonucleotide production. Dephosphorylation regenerates the low-affinity form of the enzyme, leading to product release.

The catalysed reaction is nicotinate + 5-phospho-alpha-D-ribose 1-diphosphate + ATP + H2O = nicotinate beta-D-ribonucleotide + ADP + phosphate + diphosphate. Its pathway is cofactor biosynthesis; NAD(+) biosynthesis; nicotinate D-ribonucleotide from nicotinate: step 1/1. Its function is as follows. Catalyzes the synthesis of beta-nicotinate D-ribonucleotide from nicotinate and 5-phospho-D-ribose 1-phosphate at the expense of ATP. This chain is Nicotinate phosphoribosyltransferase, found in Pectobacterium carotovorum subsp. carotovorum (strain PC1).